A 148-amino-acid polypeptide reads, in one-letter code: Large ribosomal subunit protein bL9 (148 aa).

Part of the 50S ribosomal subunit.

Binds to the 23S rRNA. Extends more that 50 Angstroms beyond the surface of the 70S ribosome. The chain is Large ribosomal subunit protein bL9 (rplI) from Thermus thermophilus (strain ATCC 27634 / DSM 579 / HB8).